The primary structure comprises 41 residues: U-AITX-Bg1a (41 aa).

Disulfide bonds link cysteine 2/cysteine 35, cysteine 4/cysteine 28, and cysteine 18/cysteine 36.

The protein belongs to the sea anemone type 3 (BDS) potassium channel toxin family.

It localises to the secreted. The protein resides in the nematocyst. Potently and selectively inhibits voltage-gated potassium channels Kv11/KCNH/ERG. Acts as a gating-modifier toxin that shifts the voltage-dependence of ERG activation in the positive direction and suppresses its current amplitudes elicited by strong depolarizing pulses that maximally activate the channels. The sequence is that of U-AITX-Bg1a from Bunodosoma granuliferum (Red warty sea anemone).